The sequence spans 348 residues: Calcium-gated potassium channel TvoK (348 aa).

Helical transmembrane passes span 19-39 (LTKV…LEFL), 52-72 (YFTA…GDVV), and 80-100 (VVAM…TATI). The RCK N-terminal domain occupies 120 to 246 (KNHTIICNWN…VSAGATEVLS (127 aa)). The 83-residue stretch at 266-348 (DFILKSLSET…KKEVEEAIKG (83 aa)) folds into the RCK C-terminal domain.

In terms of assembly, heterooctamer composed of four full-length subunits and four soluble RCK domains.

It localises to the cell membrane. Its function is as follows. Calcium-gated potassium channel. Can also be activated by Mg(2+), Mn(2+) and Ni(2+). This is Calcium-gated potassium channel TvoK from Thermoplasma volcanium (strain ATCC 51530 / DSM 4299 / JCM 9571 / NBRC 15438 / GSS1).